A 246-amino-acid chain; its full sequence is Zorya protein ZorB (246 aa).

A helical transmembrane segment spans residues 20-40; the sequence is FWISYADLMTAMMVLFLVVMV. The region spanning 86–218 is the OmpA-like domain; it reads CHDNRISFGE…RVELRMQFFG (133 aa).

Belongs to the MotB family.

Its subcellular location is the cell inner membrane. Functionally, component of antiviral defense system Zorya type I, composed of ZorA, ZorB, ZorC and ZorD. Expression of Zorya type I in E.coli (strain MG1655) confers 10,000-fold resistance to phage SECphi27, 100-fold resistance to lambda, and 10-fold resistance to T7. While most T7 infected Zorya-containing cells undergo abortive infection, a minority produce viable phage progeny. These eventually accumulate to a high multiplicity of infection, leading to culture collapse by 2 hours after initial infection. ZorA and ZorB probably assemble in the cell inner membrane and exert their effect there. The polypeptide is Zorya protein ZorB (Escherichia coli O139:H28 (strain E24377A / ETEC)).